The primary structure comprises 189 residues: Elongation factor P (189 aa).

Lys34 carries the post-translational modification N6-(3,6-diaminohexanoyl)-5-hydroxylysine.

The protein belongs to the elongation factor P family. May be beta-lysylated on the epsilon-amino group of Lys-34 by the combined action of EpmA and EpmB, and then hydroxylated on the C5 position of the same residue by EpmC (if this protein is present). Lysylation is critical for the stimulatory effect of EF-P on peptide-bond formation. The lysylation moiety may extend toward the peptidyltransferase center and stabilize the terminal 3-CCA end of the tRNA. Hydroxylation of the C5 position on Lys-34 may allow additional potential stabilizing hydrogen-bond interactions with the P-tRNA.

The protein resides in the cytoplasm. It functions in the pathway protein biosynthesis; polypeptide chain elongation. In terms of biological role, involved in peptide bond synthesis. Alleviates ribosome stalling that occurs when 3 or more consecutive Pro residues or the sequence PPG is present in a protein, possibly by augmenting the peptidyl transferase activity of the ribosome. Modification of Lys-34 is required for alleviation. In Alcanivorax borkumensis (strain ATCC 700651 / DSM 11573 / NCIMB 13689 / SK2), this protein is Elongation factor P.